The chain runs to 177 residues: Interleukin-1 receptor antagonist protein (177 aa).

The N-terminal stretch at 1–25 (MEVCRCHHGYLISLLLFLFHSETAC) is a signal peptide. The cysteines at positions 91 and 141 are disulfide-linked. N-linked (GlcNAc...) asparagine glycosylation is found at Asn109 and Asn114.

This sequence belongs to the IL-1 family.

The protein resides in the secreted. Functionally, anti-inflammatory antagonist of interleukin-1 family of proinflammatory cytokines such as interleukin-1beta/IL1B and interleukin-1alpha/IL1A. Protects from immune dysregulation and uncontrolled systemic inflammation triggered by IL1 for a range of innate stimulatory agents such as pathogens. The protein is Interleukin-1 receptor antagonist protein (IL1RN) of Tursiops truncatus (Atlantic bottle-nosed dolphin).